The sequence spans 443 residues: UDP-N-acetylglucosamine 1-carboxyvinyltransferase 1 (443 aa).

Lys22–Asn23 serves as a coordination point for phosphoenolpyruvate. A UDP-N-acetyl-alpha-D-glucosamine-binding site is contributed by Arg95. The Proton donor role is filled by Cys119. Position 119 is a 2-(S-cysteinyl)pyruvic acid O-phosphothioketal (Cys119). UDP-N-acetyl-alpha-D-glucosamine-binding positions include Arg124–Leu128, Asp308, and Val330.

The protein belongs to the EPSP synthase family. MurA subfamily.

It is found in the cytoplasm. It catalyses the reaction phosphoenolpyruvate + UDP-N-acetyl-alpha-D-glucosamine = UDP-N-acetyl-3-O-(1-carboxyvinyl)-alpha-D-glucosamine + phosphate. Its pathway is cell wall biogenesis; peptidoglycan biosynthesis. Its function is as follows. Cell wall formation. Adds enolpyruvyl to UDP-N-acetylglucosamine. This Oceanobacillus iheyensis (strain DSM 14371 / CIP 107618 / JCM 11309 / KCTC 3954 / HTE831) protein is UDP-N-acetylglucosamine 1-carboxyvinyltransferase 1.